Consider the following 445-residue polypeptide: Exodeoxyribonuclease 7 large subunit (445 aa).

It belongs to the XseA family. In terms of assembly, heterooligomer composed of large and small subunits.

Its subcellular location is the cytoplasm. It carries out the reaction Exonucleolytic cleavage in either 5'- to 3'- or 3'- to 5'-direction to yield nucleoside 5'-phosphates.. Functionally, bidirectionally degrades single-stranded DNA into large acid-insoluble oligonucleotides, which are then degraded further into small acid-soluble oligonucleotides. The chain is Exodeoxyribonuclease 7 large subunit from Shewanella halifaxensis (strain HAW-EB4).